The chain runs to 381 residues: L-lactate dehydrogenase (381 aa).

The FMN hydroxy acid dehydrogenase domain maps to 1-380; sequence MIISSASDYR…KPEALVDLSK (380 aa). Y24 is a substrate binding site. Residues S106 and Q127 each contribute to the FMN site. Residue Y129 coordinates substrate. T155 is an FMN binding site. Residue R164 participates in substrate binding. Position 251 (K251) interacts with FMN. The active-site Proton acceptor is H275. Residue R278 participates in substrate binding. 306 to 330 is a binding site for FMN; the sequence is DSGIRNGLDIVRMLALGADATMLGR.

Belongs to the FMN-dependent alpha-hydroxy acid dehydrogenase family. Requires FMN as cofactor.

The protein localises to the cell inner membrane. It catalyses the reaction (S)-lactate + A = pyruvate + AH2. Functionally, catalyzes the conversion of L-lactate to pyruvate. Is coupled to the respiratory chain. This chain is L-lactate dehydrogenase, found in Haemophilus influenzae (strain ATCC 51907 / DSM 11121 / KW20 / Rd).